The chain runs to 397 residues: MFAVRHLLKSRKHFPYAYAAATTTKSTLPMPAVPARVLIGLHTDSDCRNKRLPQIQELSFRKMSSLPTSKKPGSLLEELYAATKPYAQLMRIDRPIGTYLLFWPCAWSIALSADAGCWPDLTMLGLFGTGALIMRGAGCTINDLWDKDIDAKVERTRTRPLASGQISQFDAIVFLSAQLSLGLLVLVQLNWQSILLGASSLGLVITYPLMKRVTYWPQLVLGMAFNWGALLGWCATQGSVNLAACLPLYLSGVCWTIVYDTIYAHQDKLDDLQIGVKSTALRFGENTKVWLSGFTAAMLTGLSTAGWACDQTLPYYAAVGVVGAHLVQQIYSLNIDNPTDCAKKFLSNHQVGLILFLGIVLGTLLKANDTKNQPQPALTSSAASSYASLTQKPEVLS.

The transit peptide at 1-14 directs the protein to the mitochondrion; the sequence is MFAVRHLLKSRKHF. Transmembrane regions (helical) follow at residues 96-116, 121-141, 169-189, 190-210, 213-233, 242-262, 289-309, 313-333, and 345-365; these read IGTYLLFWPCAWSIALSADAG, LTMLGLFGTGALIMRGAGCTI, FDAIVFLSAQLSLGLLVLVQL, NWQSILLGASSLGLVITYPLM, VTYWPQLVLGMAFNWGALLGW, LAACLPLYLSGVCWTIVYDTI, VWLSGFTAAMLTGLSTAGWAC, LPYYAAVGVVGAHLVQQIYSL, and FLSNHQVGLILFLGIVLGTLL.

This sequence belongs to the UbiA prenyltransferase family. Mg(2+) is required as a cofactor.

The protein resides in the mitochondrion inner membrane. The enzyme catalyses an all-trans-polyprenyl diphosphate + 4-hydroxybenzoate = a 4-hydroxy-3-(all-trans-polyprenyl)benzoate + diphosphate. It functions in the pathway cofactor biosynthesis; ubiquinone biosynthesis. Its function is as follows. Catalyzes the prenylation of para-hydroxybenzoate (PHB) with an all-trans polyprenyl group. Mediates the second step in the final reaction sequence of coenzyme Q (CoQ) biosynthesis, which is the condensation of the polyisoprenoid side chain with PHB, generating the first membrane-bound Q intermediate. The sequence is that of 4-hydroxybenzoate polyprenyltransferase, mitochondrial from Drosophila pseudoobscura pseudoobscura (Fruit fly).